A 277-amino-acid polypeptide reads, in one-letter code: NH(3)-dependent NAD(+) synthetase (277 aa).

46–53 (GISGGQDS) is an ATP binding site. Mg(2+) is bound at residue D52. R141 is a deamido-NAD(+) binding site. Position 161 (T161) interacts with ATP. Residue E166 coordinates Mg(2+). Residues K174 and D181 each contribute to the deamido-NAD(+) site. Positions 190 and 212 each coordinate ATP. 262 to 263 (HK) contributes to the deamido-NAD(+) binding site.

Belongs to the NAD synthetase family. Homodimer.

It catalyses the reaction deamido-NAD(+) + NH4(+) + ATP = AMP + diphosphate + NAD(+) + H(+). The protein operates within cofactor biosynthesis; NAD(+) biosynthesis; NAD(+) from deamido-NAD(+) (ammonia route): step 1/1. In terms of biological role, catalyzes the ATP-dependent amidation of deamido-NAD to form NAD. Uses ammonia as a nitrogen source. The protein is NH(3)-dependent NAD(+) synthetase of Corynebacterium efficiens (strain DSM 44549 / YS-314 / AJ 12310 / JCM 11189 / NBRC 100395).